The sequence spans 320 residues: L-lactate dehydrogenase (320 aa).

Residues 15 to 16 (FV), aspartate 37, lysine 42, tyrosine 68, and 82 to 83 (GA) each bind NAD(+). Substrate-binding positions include glutamine 85, arginine 91, and 123–126 (NPVD). Residues 121-123 (ATN) and serine 146 each bind NAD(+). 151–154 (DSAR) contributes to the substrate binding site. Residues arginine 156 and 168–172 (QNVHA) contribute to the beta-D-fructose 1,6-bisphosphate site. Catalysis depends on histidine 178, which acts as the Proton acceptor. Phosphotyrosine is present on tyrosine 223. Threonine 232 lines the substrate pocket.

This sequence belongs to the LDH/MDH superfamily. LDH family. In terms of assembly, homotetramer.

The protein resides in the cytoplasm. The enzyme catalyses (S)-lactate + NAD(+) = pyruvate + NADH + H(+). The protein operates within fermentation; pyruvate fermentation to lactate; (S)-lactate from pyruvate: step 1/1. With respect to regulation, allosterically activated by fructose 1,6-bisphosphate (FBP). In terms of biological role, catalyzes the conversion of lactate to pyruvate. The polypeptide is L-lactate dehydrogenase (Bacillus subtilis (strain 168)).